Consider the following 167-residue polypeptide: NAD(P)H-quinone oxidoreductase subunit I, chloroplastic (167 aa).

4Fe-4S ferredoxin-type domains follow at residues 55 to 84 and 95 to 124; these read GRIH…VDWK and LNYS…MTEE. 8 residues coordinate [4Fe-4S] cluster: Cys64, Cys67, Cys70, Cys74, Cys104, Cys107, Cys110, and Cys114.

The protein belongs to the complex I 23 kDa subunit family. NDH is composed of at least 16 different subunits, 5 of which are encoded in the nucleus. Requires [4Fe-4S] cluster as cofactor.

It localises to the plastid. It is found in the chloroplast thylakoid membrane. It carries out the reaction a plastoquinone + NADH + (n+1) H(+)(in) = a plastoquinol + NAD(+) + n H(+)(out). The catalysed reaction is a plastoquinone + NADPH + (n+1) H(+)(in) = a plastoquinol + NADP(+) + n H(+)(out). Its function is as follows. NDH shuttles electrons from NAD(P)H:plastoquinone, via FMN and iron-sulfur (Fe-S) centers, to quinones in the photosynthetic chain and possibly in a chloroplast respiratory chain. The immediate electron acceptor for the enzyme in this species is believed to be plastoquinone. Couples the redox reaction to proton translocation, and thus conserves the redox energy in a proton gradient. This Draba nemorosa (Woodland whitlowgrass) protein is NAD(P)H-quinone oxidoreductase subunit I, chloroplastic.